The chain runs to 394 residues: Envelope glycoprotein D (394 aa).

The signal sequence occupies residues 1–25 (MGGAAARLGAVILFVVIVGLHGVRS). An interaction with TNFRSF14 region spans residues 26 to 57 (KYALVDASLKMADPNRFRGKDLPVLDQLTDPP). At 26-340 (KYALVDASLK…YHPPATPNNM (315 aa)) the chain is on the virion surface side. H64 serves as a coordination point for Zn(2+). Disulfide bonds link C91-C214, C131-C227, and C143-C152. 2 N-linked (GlcNAc...) asparagine; by host glycosylation sites follow: N119 and N146. D240 lines the Zn(2+) pocket. A profusion region spans residues 261–305 (LKIAGWHGPKAPYTSTLLPPELSETPNATQPELAPEDPEDSALLE). Positions 275-301 (STLLPPELSETPNATQPELAPEDPEDS) are disordered. An N-linked (GlcNAc...) asparagine; by host glycan is attached at N287. Residues 341–361 (GLIAGAVGGSLLAALVICGIV) traverse the membrane as a helical segment. Residues 362 to 394 (YWMRRHTQKAPKRIRLPHIREDDQPSSHQPLFY) lie on the Intravirion side of the membrane. A disordered region spans residues 375 to 394 (IRLPHIREDDQPSSHQPLFY).

Belongs to the herpesviridae glycoprotein D family. Homodimer. Interacts with host receptor TNFRSF14. Interacts with host receptor NECTIN1. Interacts (via profusion domain) with gB; this interaction occurs in the absence of gH/gL. Interacts (via profusion domain) with gH/gL heterodimer; this interaction occurs in the absence of gB. Associates with the gB-gH/gL-gD complex. Interacts (via C-terminus) with UL11 tegument protein. Interacts (via C-terminus) with VP22 tegument protein; this interaction has been demonstrated in other strains, but might be very weak since PubMed:19279114 has failed to see it. Interacts with host RSAD2.

Its subcellular location is the virion membrane. It localises to the host Golgi apparatus. In terms of biological role, envelope glycoprotein that binds to the host cell entry receptors NECTIN1, TNFRSF14/HVEM and 3-O-sulfated heparan sulfate, promoting the virus entry into host cells. May trigger fusion with host membrane, by recruiting the fusion machinery composed of gB and gH/gL. In Homo sapiens (Human), this protein is Envelope glycoprotein D (gD).